A 155-amino-acid chain; its full sequence is Interleukin-2 (155 aa).

The first 20 residues, 1–20 (MYKMQLLSCIALTLVLVANS), serve as a signal peptide directing secretion. Residue threonine 24 is glycosylated (O-linked (GalNAc...) threonine). A disulfide bridge links cysteine 79 with cysteine 127. Residue asparagine 112 is glycosylated (N-linked (GlcNAc...) asparagine).

Belongs to the IL-2 family.

Its subcellular location is the secreted. Functionally, cytokine produced by activated CD4-positive helper T-cells and to a lesser extend activated CD8-positive T-cells and natural killer (NK) cells that plays pivotal roles in the immune response and tolerance. Binds to a receptor complex composed of either the high-affinity trimeric IL-2R (IL2RA/CD25, IL2RB/CD122 and IL2RG/CD132) or the low-affinity dimeric IL-2R (IL2RB and IL2RG). Interaction with the receptor leads to oligomerization and conformation changes in the IL-2R subunits resulting in downstream signaling starting with phosphorylation of JAK1 and JAK3. In turn, JAK1 and JAK3 phosphorylate the receptor to form a docking site leading to the phosphorylation of several substrates including STAT5. This process leads to activation of several pathways including STAT, phosphoinositide-3-kinase/PI3K and mitogen-activated protein kinase/MAPK pathways. Functions as a T-cell growth factor and can increase NK-cell cytolytic activity as well. Promotes strong proliferation of activated B-cells and subsequently immunoglobulin production. Plays a pivotal role in regulating the adaptive immune system by controlling the survival and proliferation of regulatory T-cells, which are required for the maintenance of immune tolerance. Moreover, participates in the differentiation and homeostasis of effector T-cell subsets, including Th1, Th2, Th17 as well as memory CD8-positive T-cells. The protein is Interleukin-2 (IL2) of Canis lupus familiaris (Dog).